The chain runs to 492 residues: Probable cytochrome P450 513A3 (492 aa).

The helical transmembrane segment at 1–21 threads the bilayer; sequence MTSLTLYLIIFSIILYLFVNR. A heme-binding site is contributed by Cys437.

Belongs to the cytochrome P450 family. The cofactor is heme.

The protein localises to the membrane. The protein is Probable cytochrome P450 513A3 (cyp513A3) of Dictyostelium discoideum (Social amoeba).